We begin with the raw amino-acid sequence, 407 residues long: Chorismate synthase (407 aa).

NADP(+) is bound by residues Arg-40 and Arg-46. Residues 138 to 140 (RAS) and 259 to 260 (QA) contribute to the FMN site. A compositionally biased stretch (basic and acidic residues) spans 275-284 (RRGSRAHDEM). The segment at 275-308 (RRGSRAHDEMYPGTDGVVRSTNRAGGLEGGMTNG) is disordered. Residues Gly-303, 318–322 (KPIST), and Arg-344 contribute to the FMN site.

It belongs to the chorismate synthase family. Homotetramer. FMNH2 serves as cofactor.

The catalysed reaction is 5-O-(1-carboxyvinyl)-3-phosphoshikimate = chorismate + phosphate. Its pathway is metabolic intermediate biosynthesis; chorismate biosynthesis; chorismate from D-erythrose 4-phosphate and phosphoenolpyruvate: step 7/7. In terms of biological role, catalyzes the anti-1,4-elimination of the C-3 phosphate and the C-6 proR hydrogen from 5-enolpyruvylshikimate-3-phosphate (EPSP) to yield chorismate, which is the branch point compound that serves as the starting substrate for the three terminal pathways of aromatic amino acid biosynthesis. This reaction introduces a second double bond into the aromatic ring system. The polypeptide is Chorismate synthase (Mycobacterium ulcerans (strain Agy99)).